The primary structure comprises 269 residues: 5'-nucleotidase SurE (269 aa).

A divalent metal cation is bound by residues Asp11, Asp12, Ser43, and Asn101.

It belongs to the SurE nucleotidase family. Requires a divalent metal cation as cofactor.

The protein resides in the cytoplasm. The catalysed reaction is a ribonucleoside 5'-phosphate + H2O = a ribonucleoside + phosphate. Its function is as follows. Nucleotidase that shows phosphatase activity on nucleoside 5'-monophosphates. The protein is 5'-nucleotidase SurE of Synechococcus sp. (strain CC9605).